Consider the following 265-residue polypeptide: uncharacterized protein (265 aa).

A signal peptide spans 1-22 (MGYFKRVLLYIIVMVLSVFIIG). A lipid anchor (N-palmitoyl cysteine) is attached at Cys23. Cys23 carries S-diacylglycerol cysteine lipidation.

This sequence belongs to the staphylococcal tandem lipoprotein family.

The protein resides in the cell membrane. This is an uncharacterized protein from Staphylococcus aureus (strain MSSA476).